We begin with the raw amino-acid sequence, 70 residues long: Conotoxin Lt11.2 (70 aa).

Positions 1 to 26 are cleaved as a signal peptide; the sequence is MMFRLTSVSCFLLFIVFLNLVVLTNA. Cystine bridges form between Cys-27–Cys-41, Cys-34–Cys-46, Cys-40–Cys-50, and Cys-45–Cys-54. Proline amide is present on Pro-57. The propeptide occupies 61–70; it reads EKLQEFFRQR.

The protein belongs to the conotoxin I2 superfamily. In terms of tissue distribution, expressed by the venom duct.

It localises to the secreted. The protein is Conotoxin Lt11.2 of Conus litteratus (Lettered cone).